A 303-amino-acid polypeptide reads, in one-letter code: Dihydroorotate dehydrogenase B (NAD(+)), catalytic subunit (303 aa).

FMN is bound by residues serine 21 and 45-46; that span reads KG. Substrate contacts are provided by residues lysine 45 and 69-73; that span reads NAVGL. FMN is bound by residues asparagine 99 and asparagine 127. Residue asparagine 127 coordinates substrate. Cysteine 130 acts as the Nucleophile in catalysis. Positions 165 and 191 each coordinate FMN. 192–193 provides a ligand contact to substrate; that stretch reads NT. Residues glycine 217, 243–244, and 265–266 contribute to the FMN site; these read GG and GT.

It belongs to the dihydroorotate dehydrogenase family. Type 1 subfamily. Heterotetramer of 2 PyrK and 2 PyrD type B subunits. It depends on FMN as a cofactor.

It is found in the cytoplasm. It catalyses the reaction (S)-dihydroorotate + NAD(+) = orotate + NADH + H(+). The protein operates within pyrimidine metabolism; UMP biosynthesis via de novo pathway; orotate from (S)-dihydroorotate (NAD(+) route): step 1/1. Functionally, catalyzes the conversion of dihydroorotate to orotate with NAD(+) as electron acceptor. The sequence is that of Dihydroorotate dehydrogenase B (NAD(+)), catalytic subunit (pyrD) from Bacteroides thetaiotaomicron (strain ATCC 29148 / DSM 2079 / JCM 5827 / CCUG 10774 / NCTC 10582 / VPI-5482 / E50).